Consider the following 202-residue polypeptide: B-cell CLL/lymphoma 7 protein family member B (202 aa).

Residues 53–202 (DSKEKEKSKS…PVVPQTTSES (150 aa)) form a disordered region. Residues 90-99 (ENSNQSSVSD) show a composition bias toward polar residues. Residues 107–123 (SSTNSSPSPQQSESLSP) show a composition bias toward low complexity. 7 positions are modified to phosphoserine: Ser-114, Ser-118, Ser-120, Ser-122, Ser-127, Ser-148, and Ser-152.

Belongs to the BCL7 family.

In terms of biological role, positive regulator of apoptosis. Plays a role in the Wnt signaling pathway, negatively regulating the expression of Wnt signaling components CTNNB1 and HMGA1. Involved in cell cycle progression, maintenance of the nuclear structure and stem cell differentiation. May play a role in lung tumor development or progression. This is B-cell CLL/lymphoma 7 protein family member B (Bcl7b) from Mus musculus (Mouse).